The chain runs to 235 residues: Venom metalloproteinase antarease-like TserMP_B (235 aa).

In terms of domain architecture, Peptidase M12B spans 4–233 (IVVEYYIVTD…PTASCIFQQC (230 aa)). An intrachain disulfide couples Cys137 to Cys228. His161 contributes to the Zn(2+) binding site. The active site involves Glu162. Residues His165 and His171 each contribute to the Zn(2+) site.

It belongs to the venom metalloproteinase (M12B) family. The cofactor is Zn(2+). In terms of tissue distribution, expressed by the venom gland.

It localises to the secreted. Inhibited by EDTA. Its function is as follows. Acts as a metalloprotease. Penetrates intact tissue and specifically cleaves the vesicle-associated membrane protein 2 (VAMP2) (part of the SNARE complex) involved in pancreatic secretion, thus disrupting the normal vesicular traffic. This chain is Venom metalloproteinase antarease-like TserMP_B, found in Tityus serrulatus (Brazilian scorpion).